We begin with the raw amino-acid sequence, 68 residues long: Palustrin-1c (68 aa).

Positions 1-22 are cleaved as a signal peptide; that stretch reads MFTTKKSLLLLFFLGTISLSLC. Positions 23-39 are excised as a propeptide; the sequence is EEERGADEEEGDGEKLT. The cysteines at positions 62 and 68 are disulfide-linked.

Expressed by the skin glands.

Its subcellular location is the secreted. Functionally, antimicrobial activity against Gram-negative bacterium E.coli. Stimulates insulin release. The polypeptide is Palustrin-1c (Lithobates palustris (Pickerel frog)).